A 65-amino-acid chain; its full sequence is Kappa-scoloptoxin(04)-Ssd1a (65 aa).

A signal peptide spans 1 to 24; sequence MKKTCVVSVFLVLLLLKFHDLSMG. A propeptide spanning residues 25–36 is cleaved from the precursor; that stretch reads EEISPLKKVAPR. 2 disulfide bridges follow: C42/C53 and C47/C60.

Expressed by the venom gland.

The protein resides in the secreted. Voltage-gated potassium channel inhibitor. This Scolopendra dehaani (Thai centipede) protein is Kappa-scoloptoxin(04)-Ssd1a.